A 436-amino-acid polypeptide reads, in one-letter code: UDP-N-acetylglucosamine 1-carboxyvinyltransferase (436 aa).

Phosphoenolpyruvate is bound at residue 22–23 (KN). Arginine 96 lines the UDP-N-acetyl-alpha-D-glucosamine pocket. Cysteine 120 (proton donor) is an active-site residue. Cysteine 120 bears the 2-(S-cysteinyl)pyruvic acid O-phosphothioketal mark. UDP-N-acetyl-alpha-D-glucosamine contacts are provided by residues 125-129 (RPIDL), aspartate 309, and isoleucine 331.

Belongs to the EPSP synthase family. MurA subfamily.

The protein localises to the cytoplasm. It catalyses the reaction phosphoenolpyruvate + UDP-N-acetyl-alpha-D-glucosamine = UDP-N-acetyl-3-O-(1-carboxyvinyl)-alpha-D-glucosamine + phosphate. Its pathway is cell wall biogenesis; peptidoglycan biosynthesis. Its function is as follows. Cell wall formation. Adds enolpyruvyl to UDP-N-acetylglucosamine. This is UDP-N-acetylglucosamine 1-carboxyvinyltransferase from Acidobacterium capsulatum (strain ATCC 51196 / DSM 11244 / BCRC 80197 / JCM 7670 / NBRC 15755 / NCIMB 13165 / 161).